Here is an 831-residue protein sequence, read N- to C-terminus: Probable inactive serine/threonine-protein kinase DDB_G0274613 (831 aa).

Residues cysteine 9–arginine 63 form an RING-type zinc finger. Positions arginine 83–phenylalanine 348 form a coiled coil. One can recognise a Protein kinase domain in the interval glutamine 414–phenylalanine 787. Residues asparagine 657 to asparagine 703 are disordered.

Belongs to the protein kinase superfamily. CMGC Ser/Thr protein kinase family.

The protein is Probable inactive serine/threonine-protein kinase DDB_G0274613 of Dictyostelium discoideum (Social amoeba).